The chain runs to 514 residues: ATP synthase subunit alpha (514 aa).

170–177 lines the ATP pocket; sequence GDRQTGKT.

This sequence belongs to the ATPase alpha/beta chains family. As to quaternary structure, F-type ATPases have 2 components, CF(1) - the catalytic core - and CF(0) - the membrane proton channel. CF(1) has five subunits: alpha(3), beta(3), gamma(1), delta(1), epsilon(1). CF(0) has three main subunits: a(1), b(2) and c(9-12). The alpha and beta chains form an alternating ring which encloses part of the gamma chain. CF(1) is attached to CF(0) by a central stalk formed by the gamma and epsilon chains, while a peripheral stalk is formed by the delta and b chains.

It localises to the cell inner membrane. The catalysed reaction is ATP + H2O + 4 H(+)(in) = ADP + phosphate + 5 H(+)(out). In terms of biological role, produces ATP from ADP in the presence of a proton gradient across the membrane. The alpha chain is a regulatory subunit. The polypeptide is ATP synthase subunit alpha (Acidithiobacillus ferrooxidans (strain ATCC 23270 / DSM 14882 / CIP 104768 / NCIMB 8455) (Ferrobacillus ferrooxidans (strain ATCC 23270))).